A 286-amino-acid chain; its full sequence is Polygalacturonan/rhamnogalacturonan transport system permease protein YtcP (286 aa).

6 helical membrane-spanning segments follow: residues 9-29 (LIYG…IHVI), 69-89 (LLVS…LSSL), 106-126 (MFLV…FLVV), 131-151 (LLDS…NLII), 176-196 (GIFF…ISLF), and 251-271 (TIKM…YPFI). The region spanning 69–271 (LLVSVFVTVI…IPVLLVYPFI (203 aa)) is the ABC transmembrane type-1 domain.

It belongs to the binding-protein-dependent transport system permease family. CysTW subfamily. In terms of assembly, the complex is probably composed of two ATP-binding proteins (MsmX), two transmembrane proteins (YtcP and YteP) and a solute-binding protein (YtcQ).

It is found in the cell membrane. Its function is as follows. Involved in pectin degradation. Part of the ABC transporter complex YtcQP-YteP involved in the uptake of polygalacturonan and rhamnogalacturonan type I. Responsible for the translocation of the substrate across the membrane. This is Polygalacturonan/rhamnogalacturonan transport system permease protein YtcP (ytcP) from Bacillus subtilis (strain 168).